Here is a 348-residue protein sequence, read N- to C-terminus: Nitrogenase vanadium-iron protein beta chain (348 aa).

Cysteine 31, cysteine 56, cysteine 115, and serine 153 together coordinate [8Fe-7S] cluster.

It belongs to the NifD/NifK/NifE/NifN family. As to quaternary structure, hexamer of two alpha, two beta, and two delta chains. [8Fe-7S] cluster is required as a cofactor.

It catalyses the reaction N2 + 8 reduced [2Fe-2S]-[ferredoxin] + 16 ATP + 16 H2O = H2 + 8 oxidized [2Fe-2S]-[ferredoxin] + 2 NH4(+) + 16 ADP + 16 phosphate + 6 H(+). In terms of biological role, this vanadium-iron protein is part of the nitrogenase complex that catalyzes the key enzymatic reactions in nitrogen fixation. The chain is Nitrogenase vanadium-iron protein beta chain (vnfK) from Azorhizophilus paspali (Azotobacter paspali).